The sequence spans 132 residues: Phosphoribosyl-AMP cyclohydrolase (132 aa).

Asp79 contacts Mg(2+). Cys80 contributes to the Zn(2+) binding site. Mg(2+) is bound by residues Asp81 and Asp83. Zn(2+) contacts are provided by Cys100 and Cys107.

This sequence belongs to the PRA-CH family. Homodimer. The cofactor is Mg(2+). Zn(2+) serves as cofactor.

The protein localises to the cytoplasm. It carries out the reaction 1-(5-phospho-beta-D-ribosyl)-5'-AMP + H2O = 1-(5-phospho-beta-D-ribosyl)-5-[(5-phospho-beta-D-ribosylamino)methylideneamino]imidazole-4-carboxamide. It participates in amino-acid biosynthesis; L-histidine biosynthesis; L-histidine from 5-phospho-alpha-D-ribose 1-diphosphate: step 3/9. Catalyzes the hydrolysis of the adenine ring of phosphoribosyl-AMP. This chain is Phosphoribosyl-AMP cyclohydrolase, found in Delftia acidovorans (strain DSM 14801 / SPH-1).